The chain runs to 392 residues: Large ribosomal subunit protein uL3 (392 aa).

The protein belongs to the universal ribosomal protein uL3 family. As to quaternary structure, component of the large ribosomal subunit (LSU). Mature N.crassa ribosomes consist of a small (40S) and a large (60S) subunit. The 40S small subunit contains 1 molecule of ribosomal RNA (18S rRNA) and at least 32 different proteins. The large 60S subunit contains 3 rRNA molecules (26S, 5.8S and 5S rRNA) and at least 42 different proteins.

It is found in the cytoplasm. Component of the ribosome, a large ribonucleoprotein complex responsible for the synthesis of proteins in the cell. The small ribosomal subunit (SSU) binds messenger RNAs (mRNAs) and translates the encoded message by selecting cognate aminoacyl-transfer RNA (tRNA) molecules. The large subunit (LSU) contains the ribosomal catalytic site termed the peptidyl transferase center (PTC), which catalyzes the formation of peptide bonds, thereby polymerizing the amino acids delivered by tRNAs into a polypeptide chain. The nascent polypeptides leave the ribosome through a tunnel in the LSU and interact with protein factors that function in enzymatic processing, targeting, and the membrane insertion of nascent chains at the exit of the ribosomal tunnel. The sequence is that of Large ribosomal subunit protein uL3 (rpl-3) from Neurospora crassa (strain ATCC 24698 / 74-OR23-1A / CBS 708.71 / DSM 1257 / FGSC 987).